The following is a 193-amino-acid chain: A-type ATP synthase subunit E (193 aa).

The protein belongs to the V-ATPase E subunit family. As to quaternary structure, has multiple subunits with at least A(3), B(3), C, D, E, F, H, I and proteolipid K(x).

It localises to the cell membrane. Its function is as follows. Component of the A-type ATP synthase that produces ATP from ADP in the presence of a proton gradient across the membrane. In Haloquadratum walsbyi (strain DSM 16790 / HBSQ001), this protein is A-type ATP synthase subunit E.